The sequence spans 374 residues: Heat stress transcription factor A-8 (374 aa).

The DNA-binding element occupies 17–112 (VAPFLRKCYD…LLKNVIRRKN (96 aa)). Positions 126–192 (TTYAQEKSGL…EMLSFLVMVM (67 aa)) are hydrophobic repeat HR-A/B. Positions 285–294 (DGAWEKLLLL) match the AHA1 motif. Positions 298-303 (RKKTKK) match the Nuclear localization signal motif. An AHA2 motif is present at residues 330 to 339 (KSYMLKLISE). A Nuclear export signal motif is present at residues 363 to 370 (LTEQMELL).

This sequence belongs to the HSF family. Class A subfamily. In terms of assembly, homotrimer. Post-translationally, exhibits temperature-dependent phosphorylation.

Its subcellular location is the cytoplasm. It localises to the nucleus. Transcriptional activator that specifically binds DNA sequence 5'-AGAAnnTTCT-3' known as heat shock promoter elements (HSE). The chain is Heat stress transcription factor A-8 (HSFA8) from Arabidopsis thaliana (Mouse-ear cress).